We begin with the raw amino-acid sequence, 380 residues long: uncharacterized protein (380 aa).

A coiled-coil region spans residues 256-301 (DKEEKIQKSYQYQTELITELQGRIAELEKENQSLKENVKEPETSKP).

This is an uncharacterized protein from Pasteurella multocida (strain Pm70).